Reading from the N-terminus, the 126-residue chain is Aspartate 1-decarboxylase (126 aa).

The active-site Schiff-base intermediate with substrate; via pyruvic acid is Ser25. Pyruvic acid (Ser) is present on Ser25. Thr57 is a binding site for substrate. The Proton donor role is filled by Tyr58. 73–75 (GAA) is a binding site for substrate.

It belongs to the PanD family. Heterooctamer of four alpha and four beta subunits. Pyruvate is required as a cofactor. Is synthesized initially as an inactive proenzyme, which is activated by self-cleavage at a specific serine bond to produce a beta-subunit with a hydroxyl group at its C-terminus and an alpha-subunit with a pyruvoyl group at its N-terminus.

It localises to the cytoplasm. The catalysed reaction is L-aspartate + H(+) = beta-alanine + CO2. Its pathway is cofactor biosynthesis; (R)-pantothenate biosynthesis; beta-alanine from L-aspartate: step 1/1. Catalyzes the pyruvoyl-dependent decarboxylation of aspartate to produce beta-alanine. This Alkalilimnicola ehrlichii (strain ATCC BAA-1101 / DSM 17681 / MLHE-1) protein is Aspartate 1-decarboxylase.